The following is a 281-amino-acid chain: Putative integrase/recombinase y4rD (281 aa).

The 94-residue stretch at 5–98 (LLLAPLLESY…AIRSFFHHVA (94 aa)) folds into the Core-binding (CB) domain. The region spanning 122–281 (EVTHHLTKAE…TMSGTENASV (160 aa)) is the Tyr recombinase domain. Active-site residues include R162, K188, H262, and R265.

It belongs to the 'phage' integrase family.

Functionally, seems to be non-functional. The protein is Putative integrase/recombinase y4rD of Sinorhizobium fredii (strain NBRC 101917 / NGR234).